The primary structure comprises 545 residues: MAAKEVVFGNDARVRMLAGVNILANAVKVTLGPKGRNVVLDKSFGSPLITKDGVSVAKEIELEDKFENMGAQMVKEVASKANDAAGDGTTTATVLAQAIVVEGLKAVAAGMNPMDLKRGIDKAVIAAVAELKALSQPCADSKAIAQVATISANSDESIGEIIATAMEKVGKEGVITVEEGQALENELDVVEGMQFDRGYLSPYFINKPETGSVELDHPFVLLVDKKISNIRELLPILEGLAKTGKPLLIVAEDVEGEALATLVVNNMRGIVKVAAVKAPGFGDRRKAMLQDVAILTGGTVIAEEIGLELEKATLEDLGTAKRVVITKDNTTIIDGNGEQTQIAARVSQIKQQVEESTSDYDKEKLQERMAKLAGGVAVIKVGAATEVEMKEKKARVEDALHATRAAVEEGVVPGGGVALVRVASKIADVEVLNEDQKHGVVIALRAMEAPLRQIATNAGEEASVVANTVKNGSGNYGYNAGNDTYGDMLEMGILDPTKVTRCALQFAASIAGLMITTEAMVAEIPQNASQDMGGMGGMGGMGGMM.

ATP-binding positions include 30-33 (TLGP), K51, 87-91 (DGTTT), G415, and D495.

Belongs to the chaperonin (HSP60) family. As to quaternary structure, forms a cylinder of 14 subunits composed of two heptameric rings stacked back-to-back. Interacts with the co-chaperonin GroES.

The protein resides in the cytoplasm. The catalysed reaction is ATP + H2O + a folded polypeptide = ADP + phosphate + an unfolded polypeptide.. Functionally, together with its co-chaperonin GroES, plays an essential role in assisting protein folding. The GroEL-GroES system forms a nano-cage that allows encapsulation of the non-native substrate proteins and provides a physical environment optimized to promote and accelerate protein folding. The sequence is that of Chaperonin GroEL from Shewanella baltica (strain OS185).